The primary structure comprises 341 residues: MKSLVKAKAEKGIWLQDTPKPEVGHNDLLIKIRKTAICGTDMHIYNWDEWSQNTIPVPVVVGHEYVGEVVGMGQEVKGFEVGDRVSGEGHITCGHCRNCRAGRVHLCRNTEGVGVNRPGAFAEYLVIPAFNAFKIPDNISDDLASIFDPFGNAVHTALSFDLVGEDVLITGAGPIGIMAAAVAKHVGARHVVVTDINPYRLELAKKMGATRTVDVSKENLQDVMDELGMSEGFDVGLEMSGVPVAFRDMLNKMNHGGKIAMLGIPPQDVAVDWNQVIFKGLVIKGIYGREMFETWYKMASLLQSGLDLSPIITHTFSIDDFQKGFDTMGSGHSGKVILDWQ.

Cys38 lines the Zn(2+) pocket. Active-site charge relay system residues include Thr40 and His43. Residues His63, Glu64, Cys93, Cys96, Cys99, and Cys107 each coordinate Zn(2+). NAD(+) contacts are provided by residues Ile175, Asp195, Arg200, 262-264 (LGI), and 286-287 (IY).

This sequence belongs to the zinc-containing alcohol dehydrogenase family. In terms of assembly, homotetramer. Zn(2+) serves as cofactor.

It localises to the cytoplasm. The enzyme catalyses L-threonine + NAD(+) = (2S)-2-amino-3-oxobutanoate + NADH + H(+). Its pathway is amino-acid degradation; L-threonine degradation via oxydo-reductase pathway; glycine from L-threonine: step 1/2. Catalyzes the NAD(+)-dependent oxidation of L-threonine to 2-amino-3-ketobutyrate. The protein is L-threonine 3-dehydrogenase of Alteromonas mediterranea (strain DSM 17117 / CIP 110805 / LMG 28347 / Deep ecotype).